The following is a 1174-amino-acid chain: Ribonucleoside-diphosphate reductase large subunit-like protein (1174 aa).

Residues 50–72 (PYVRIMNGVSGIQIGNHNAMSIA) carry the RIP homotypic interaction motif (RHIM) motif. Disordered stretches follow at residues 170-269 (ASNA…KLKP) and 291-325 (AAAA…DQSS). Low complexity-rich tracts occupy residues 182–202 (ATSG…AATA), 233–243 (HVSVGTQATPS), and 291–316 (AAAA…AMAT).

The protein belongs to the ribonucleoside diphosphate reductase large chain family. In terms of assembly, self-assembles into homo-oligomeric amyloid fibrils. Interacts with host RIPK1 (via RIP homotypic interaction motif); this interaction inhibits RIPK1 ubiquitination thereby preventing effective activation of host NF-kappa-B. Interacts with host RIPK3 (via RIP homotypic interaction motif); this interaction disrupts RIPK3-RIPK1 interactions characteristic of TNF-alpha induced necroptosis, thereby suppressing this death pathway. Interacts (via RIP homotypic interaction motif) with host ZBP1 (via RIP homotypic interaction motif); this interaction inhibits recruitment of RIPK1 and RIPK3 to ZBP1 and prevents ZBP1-induced NF-kappa-B activation. Post-translationally, undergoes proteolytic cleavage, generating two peptides, a N-terminal and a 116 kDa. The N-terminal peptide retains RIPK1- and RIPK3-binding activity as well as cell death suppression activity.

It localises to the virion. Its subcellular location is the host cytoplasm. In terms of biological role, provides optimal viral replication conditions by promoting host cell survival and avoiding the host inflammatory response linked to NF-kappa-B activation. Blocks RIPK1 ubiquitination, thereby preventing NF-kappa-B activation and virally induced inflammatory response. Prevents host necroptosis by targeting RIPK3 thereby preventing the formation of necroptotic RIPK1-RIPK3 complexes. Also inhibits ZBP1-induced necroptosis. Does not have ribonucleotide reductase activity. Betaherpesviruses probably use another strategy to expand the dNTP pool in a quiescent host cell. The chain is Ribonucleoside-diphosphate reductase large subunit-like protein from Murid herpesvirus 1 (strain Smith) (MuHV-1).